The primary structure comprises 316 residues: Olfactory receptor 2AG2 (316 aa).

Topologically, residues 1–30 (MELRNSTLGSGFILVGILNDSGSPELLYAT) are extracellular. Residues Asn5 and Asn19 are each glycosylated (N-linked (GlcNAc...) asparagine). A helical transmembrane segment spans residues 31–51 (FTILYMLALTSNGLLLLAITI). Over 52–56 (EARLH) the chain is Cytoplasmic. The helical transmembrane segment at 57–77 (MPMYLLLGQLSLMDLLFTSVV) threads the bilayer. Topologically, residues 78–97 (TPKALADFLRRENTISFGGC) are extracellular. Residues Cys97 and Cys179 are joined by a disulfide bond. Residues 98–118 (ALQMFLALTMGSAEDLLLAFM) traverse the membrane as a helical segment. Topologically, residues 119 to 139 (AYDRYVAICHPLKYMTLMSPR) are cytoplasmic. Residues 140-160 (VCWIMVATSWILASLIAIGHT) traverse the membrane as a helical segment. Over 161-205 (MYTMHLPFCVSWEIRHLLCEIPPLLKLACADTSRYELIIYVTGVT) the chain is Extracellular. A helical membrane pass occupies residues 206–226 (FLLLPISAIVASYTLVLFTVL). Residues 227 to 244 (RMPSNEGRKKALVTCSSH) lie on the Cytoplasmic side of the membrane. The chain crosses the membrane as a helical span at residues 245 to 265 (LIVVGMFYGAATFMYVLPSSF). Residues 266-271 (HSPKQD) lie on the Extracellular side of the membrane. A helical transmembrane segment spans residues 272–292 (NIISVFYTIVTPALNPLIYSL). Residues 293–316 (RNKEVMRALRRVLGKYILLAHSTL) are Cytoplasmic-facing.

It belongs to the G-protein coupled receptor 1 family.

It localises to the cell membrane. Functionally, odorant receptor. The protein is Olfactory receptor 2AG2 (OR2AG2) of Homo sapiens (Human).